The chain runs to 108 residues: Class I hydrophobin 3 (108 aa).

An N-terminal signal peptide occupies residues 1 to 17 (MFFQTTIVAALASLAVA). 4 disulfide bridges follow: Cys-28–Cys-87, Cys-35–Cys-81, Cys-36–Cys-69, and Cys-88–Cys-101. N-linked (GlcNAc...) asparagine glycosylation occurs at Asn-37.

It belongs to the fungal hydrophobin family. Self-assembles to form functional amyloid fibrils called rodlets. Self-assembly into fibrillar rodlets occurs spontaneously at hydrophobic:hydrophilic interfaces and the rodlets further associate laterally to form amphipathic monolayers.

It localises to the secreted. Its subcellular location is the cell wall. Functionally, aerial growth, conidiation, and dispersal of filamentous fungi in the environment rely upon a capability of their secreting small amphipathic proteins called hydrophobins (HPBs) with low sequence identity. Class I can self-assemble into an outermost layer of rodlet bundles on aerial cell surfaces, conferring cellular hydrophobicity that supports fungal growth, development and dispersal; whereas Class II form highly ordered films at water-air interfaces through intermolecular interactions but contribute nothing to the rodlet structure. Vmh3 is a class I hydrophobin that is essential for the maintenance of the surface hydrophobicity of the mycelium and might be involved in the development of fruiting bodies. Plays an important role in hyphal resistance against environmental stress. Necessary for the efficient biodegradation of lignin. This is Class I hydrophobin 3 from Pleurotus ostreatus (strain PC15) (Oyster mushroom).